The following is a 58-amino-acid chain: Teratocyte protein CftICK-III (58 aa).

Positions 1–24 are cleaved as a signal peptide; sequence MQKFMRLFFLGLFFILFMTTQIKA. Intrachain disulfides connect cysteine 27-cysteine 42, cysteine 34-cysteine 47, and cysteine 41-cysteine 55.

As to expression, abundantly expressed by teratocytes, which are extra-embryonic cells released by parasitoid wasps into their hosts during larval eclosion.

It localises to the secreted. This endoparasitoid wasp peptide has immununosuppressive and insecticidal activities. Suppress cellular immunity which is detectable as a reduction of hemocyte encapsulation in the host. In vivo, ingestion of this peptide (probably at excessive doses) increases larval mortality and reduces leaf consumption in both lepidopteran species D.saccharalis and S.frugiperda, which are permissive and non-permissive hosts for C.flavipes, respectively. In Cotesia flavipes (Parasitic wasp), this protein is Teratocyte protein CftICK-III.